The primary structure comprises 467 residues: Glutamate--tRNA ligase (467 aa).

Residues 10–20 (PSPTGYLHVGG) carry the 'HIGH' region motif. Zn(2+) contacts are provided by Cys99, Cys101, Cys126, and Glu128. The 'KMSKS' region signature appears at 237-241 (RLSKR). Lys240 is a binding site for ATP.

The protein belongs to the class-I aminoacyl-tRNA synthetase family. Glutamate--tRNA ligase type 1 subfamily. Monomer. It depends on Zn(2+) as a cofactor.

The protein localises to the cytoplasm. The catalysed reaction is tRNA(Glu) + L-glutamate + ATP = L-glutamyl-tRNA(Glu) + AMP + diphosphate. Its function is as follows. Catalyzes the attachment of glutamate to tRNA(Glu) in a two-step reaction: glutamate is first activated by ATP to form Glu-AMP and then transferred to the acceptor end of tRNA(Glu). This is Glutamate--tRNA ligase from Geotalea uraniireducens (strain Rf4) (Geobacter uraniireducens).